The chain runs to 853 residues: MKGDTRHLNGEEDAGGREDSILVNGACSDQSSDSPPILEAIRTPEIRGRRSSSRLSKREVSSLLSYTQDLTGDGDGEDGDGSDTPVMPKLFRETRTRSESPAVRTRNNNSVSSRERHRPSPRSTRGRQGRNHVDESPVEFPATRSLRRRATASAGTPWPSPPSSYLTIDLTDDTEDTHGTPQSSSTPYARLAQDSQQGGMESPQVEADSGDGDSSEYQDGKEFGIGDLVWGKIKGFSWWPAMVVSWKATSKRQAMSGMRWVQWFGDGKFSEVSADKLVALGLFSQHFNLATFNKLVSYRKAMYHALEKARVRAGKTFPSSPGDSLEDQLKPMLEWAHGGFKPTGIEGLKPNNTQPVVNKSKVRRAGSRKLESRKYENKTRRRTADDSATSDYCPAPKRLKTNCYNNGKDRGDEDQSREQMASDVANNKSSLEDGCLSCGRKNPVSFHPLFEGGLCQTCRDRFLELFYMYDDDGYQSYCTVCCEGRELLLCSNTSCCRCFCVECLEVLVGTGTAAEAKLQEPWSCYMCLPQRCHGVLRRRKDWNVRLQAFFTSDTGLEYEAPKLYPAIPAARRRPIRVLSLFDGIATGYLVLKELGIKVGKYVASEVCEESIAVGTVKHEGNIKYVNDVRNITKKNIEEWGPFDLVIGGSPCNDLSNVNPARKGLYEGTGRLFFEFYHLLNYSRPKEGDDRPFFWMFENVVAMKVGDKRDISRFLECNPVMIDAIKVSAAHRARYFWGNLPGMNRPVIASKNDKLELQDCLEYNRIAKLKKVQTITTKSNSIKQGKNQLFPVVMNGKEDVLWCTELERIFGFPVHYTDVSNMGRGARQKLLGRSWSVPVIRHLFAPLKDYFACE.

The span at 1–20 shows a compositional bias: basic and acidic residues; sequence MKGDTRHLNGEEDAGGREDS. The segment at 1 to 218 is disordered; it reads MKGDTRHLNG…SGDGDSSEYQ (218 aa). The interaction with DNMT1 and DNMT3A stretch occupies residues 1–298; that stretch reads MKGDTRHLNG…LATFNKLVSY (298 aa). Residues 72–81 show a composition bias toward acidic residues; sequence GDGDGEDGDG. The residue at position 82 (Ser-82) is a Phosphoserine. Lys-89 is covalently cross-linked (Glycyl lysine isopeptide (Lys-Gly) (interchain with G-Cter in SUMO2)). The residue at position 96 (Thr-96) is a Phosphothreonine. 2 positions are modified to phosphoserine: Ser-100 and Ser-110. The segment covering 115–130 has biased composition (basic residues); the sequence is ERHRPSPRSTRGRQGR. Residues Ser-136, Ser-195, Ser-202, and Ser-209 each carry the phosphoserine modification. Polar residues predominate over residues 179-199; sequence GTPQSSSTPYARLAQDSQQGG. The region spanning 225 to 283 is the PWWP domain; that stretch reads IGDLVWGKIKGFSWWPAMVVSWKATSKRQAMSGMRWVQWFGDGKFSEVSADKLVALGLF. Residues 341 to 423 are disordered; that stretch reads KPTGIEGLKP…DQSREQMASD (83 aa). 2 stretches are compositionally biased toward basic and acidic residues: residues 368–385 and 407–417; these read RKLESRKYENKTRRRTAD and GKDRGDEDQSR. A Citrulline modification is found at Arg-410. The 133-residue stretch at 423-555 folds into the ADD domain; it reads DVANNKSSLE…LQAFFTSDTG (133 aa). The GATA-type; atypical zinc finger occupies 434–464; the sequence is GCLSCGRKNPVSFHPLFEGGLCQTCRDRFLE. An interaction with the PRC2/EED-EZH2 complex region spans residues 435-527; it reads CLSCGRKNPV…LQEPWSCYMC (93 aa). The PHD-type; atypical zinc-finger motif lies at 475–531; sequence QSYCTVCCEGRELLLCSNTSCCRCFCVECLEVLVGTGTAAEAKLQEPWSCYMCLPQR. Residues 575 to 853 form the SAM-dependent MTase C5-type domain; sequence IRVLSLFDGI…APLKDYFACE (279 aa). Residues 582–586 and Glu-605 each bind S-adenosyl-L-methionine; that span reads DGIAT. A Glycyl lysine isopeptide (Lys-Gly) (interchain with G-Cter in SUMO2) cross-link involves residue Lys-617. 627–629 is a binding site for S-adenosyl-L-methionine; it reads DVR. Cys-651 is a catalytic residue. 832-834 contributes to the S-adenosyl-L-methionine binding site; the sequence is RSW.

Belongs to the class I-like SAM-binding methyltransferase superfamily. C5-methyltransferase family. In terms of assembly, interacts with BAZ2A/TIP5, SUV39H1 and CBX4. Interacts with UHRF1. Interacts with DNMT1 and DNMT3A, SETDB1, UBL1, UBE2I9 and ZHX1. Interacts with the PRC2/EED-EZH2 complex. In terms of processing, sumoylated. Post-translationally, citrullinated by PADI4. In terms of tissue distribution, ubiquitous; highly expressed in fetal liver, heart, kidney, placenta, and at lower levels in spleen, colon, brain, liver, small intestine, lung, peripheral blood mononuclear cells, and skeletal muscle. Isoform 1 is expressed in all tissues except brain, skeletal muscle and PBMC, 3 is ubiquitous, 4 is expressed in all tissues except brain, skeletal muscle, lung and prostate and 5 is detectable only in testis and at very low level in brain and prostate.

The protein localises to the nucleus. It catalyses the reaction a 2'-deoxycytidine in DNA + S-adenosyl-L-methionine = a 5-methyl-2'-deoxycytidine in DNA + S-adenosyl-L-homocysteine + H(+). With respect to regulation, activated by binding to the regulatory factor DNMT3L. Required for genome-wide de novo methylation and is essential for the establishment of DNA methylation patterns during development. DNA methylation is coordinated with methylation of histones. May preferentially methylates nucleosomal DNA within the nucleosome core region. May function as transcriptional co-repressor by associating with CBX4 and independently of DNA methylation. Seems to be involved in gene silencing. In association with DNMT1 and via the recruitment of CTCFL/BORIS, involved in activation of BAG1 gene expression by modulating dimethylation of promoter histone H3 at H3K4 and H3K9. Isoforms 4 and 5 are probably not functional due to the deletion of two conserved methyltransferase motifs. Functions as a transcriptional corepressor by associating with ZHX1. Required for DUX4 silencing in somatic cells. This Homo sapiens (Human) protein is DNA (cytosine-5)-methyltransferase 3B (DNMT3B).